The following is a 517-amino-acid chain: GMP synthase [glutamine-hydrolyzing] (517 aa).

Residues 9-199 enclose the Glutamine amidotransferase type-1 domain; sequence RILILDFGSQ…VLNVCGCEGL (191 aa). The active-site Nucleophile is the C86. Catalysis depends on residues H173 and E175. In terms of domain architecture, GMPS ATP-PPase spans 200 to 392; that stretch reads WTSASIIEDA…LGLPYNMLYR (193 aa). 227 to 233 is a binding site for ATP; that stretch reads SGGVDSS.

As to quaternary structure, homodimer.

It catalyses the reaction XMP + L-glutamine + ATP + H2O = GMP + L-glutamate + AMP + diphosphate + 2 H(+). The protein operates within purine metabolism; GMP biosynthesis; GMP from XMP (L-Gln route): step 1/1. Catalyzes the synthesis of GMP from XMP. The chain is GMP synthase [glutamine-hydrolyzing] from Aliivibrio fischeri (strain ATCC 700601 / ES114) (Vibrio fischeri).